Here is a 186-residue protein sequence, read N- to C-terminus: Elongation factor P (186 aa).

The protein belongs to the elongation factor P family.

The protein resides in the cytoplasm. Its pathway is protein biosynthesis; polypeptide chain elongation. Involved in peptide bond synthesis. Stimulates efficient translation and peptide-bond synthesis on native or reconstituted 70S ribosomes in vitro. Probably functions indirectly by altering the affinity of the ribosome for aminoacyl-tRNA, thus increasing their reactivity as acceptors for peptidyl transferase. The chain is Elongation factor P from Brucella canis (strain ATCC 23365 / NCTC 10854 / RM-666).